Reading from the N-terminus, the 196-residue chain is Glycerol-3-phosphate acyltransferase (196 aa).

The next 4 membrane-spanning stretches (helical) occupy residues 5 to 25 (GLIA…MILT), 70 to 90 (VVIA…LGAF), 111 to 131 (IGVL…IWLL), and 152 to 172 (LLLW…LTVL).

It belongs to the PlsY family. As to quaternary structure, probably interacts with PlsX.

Its subcellular location is the cell inner membrane. It catalyses the reaction an acyl phosphate + sn-glycerol 3-phosphate = a 1-acyl-sn-glycero-3-phosphate + phosphate. Its pathway is lipid metabolism; phospholipid metabolism. In terms of biological role, catalyzes the transfer of an acyl group from acyl-phosphate (acyl-PO(4)) to glycerol-3-phosphate (G3P) to form lysophosphatidic acid (LPA). This enzyme utilizes acyl-phosphate as fatty acyl donor, but not acyl-CoA or acyl-ACP. The polypeptide is Glycerol-3-phosphate acyltransferase (Nitrobacter winogradskyi (strain ATCC 25391 / DSM 10237 / CIP 104748 / NCIMB 11846 / Nb-255)).